A 552-amino-acid polypeptide reads, in one-letter code: Elongator complex protein 3 (552 aa).

Residues 84–374 form the Radical SAM core domain; it reads RTASGIAVVA…YRVQRDIPMP (291 aa). [4Fe-4S] cluster-binding residues include cysteine 101, cysteine 111, and cysteine 114. Residues lysine 166, 476–479, 499–501, and tyrosine 532 contribute to the acetyl-CoA site; these read ELHV and FGM. The region spanning 398–552 is the N-acetyltransferase domain; the sequence is TTCRDVRTRE…YMSKSIEENN (155 aa).

It belongs to the ELP3 family. Component of the elongator complex composed of Elp1, Elp2, Elp3, Elp4, Elp5 and Elp6. The elongator complex associates with and stabilizes microtubules; efficient interaction requires the full complex. The cofactor is [4Fe-4S] cluster.

Its subcellular location is the cytoplasm. It is found in the nucleus. The protein localises to the cytoskeleton. It localises to the spindle. It carries out the reaction uridine(34) in tRNA + acetyl-CoA + S-adenosyl-L-methionine + H2O = 5-(carboxymethyl)uridine(34) in tRNA + 5'-deoxyadenosine + L-methionine + CoA + 2 H(+). It participates in tRNA modification; 5-methoxycarbonylmethyl-2-thiouridine-tRNA biosynthesis. In terms of biological role, catalytic tRNA acetyltransferase subunit of the elongator complex, which is required for multiple tRNA modifications, including mcm5U (5-methoxycarbonylmethyl uridine), mcm5s2U (5-methoxycarbonylmethyl-2-thiouridine), and ncm5U (5-carbamoylmethyl uridine). In the elongator complex, acts as a tRNA uridine(34) acetyltransferase by mediating formation of carboxymethyluridine in the wobble base at position 34 in tRNAs. Binding by the elongator complex stabilizes microtubules and promotes their growth. This induces central spindle asymmetry, promoting polarized signaling endosome trafficking during asymmetric cell division and cell fate assignation of sensory organ precursor cells. Plays a role in the control of synaptic bouton expansion. Required for larval development. Involved in protein synthesis-dependent long-term memory formation, probably as part of the elongator complex. The polypeptide is Elongator complex protein 3 (Drosophila melanogaster (Fruit fly)).